Reading from the N-terminus, the 115-residue chain is NADH-ubiquinone oxidoreductase chain 3 (115 aa).

A run of 3 helical transmembrane segments spans residues 3 to 23 (LLII…IAFW), 55 to 75 (FFLV…LLPL), and 86 to 106 (TMMA…SYEW).

Belongs to the complex I subunit 3 family. Core subunit of respiratory chain NADH dehydrogenase (Complex I) which is composed of 45 different subunits. Interacts with TMEM186. Interacts with TMEM242.

It is found in the mitochondrion inner membrane. It catalyses the reaction a ubiquinone + NADH + 5 H(+)(in) = a ubiquinol + NAD(+) + 4 H(+)(out). Functionally, core subunit of the mitochondrial membrane respiratory chain NADH dehydrogenase (Complex I) which catalyzes electron transfer from NADH through the respiratory chain, using ubiquinone as an electron acceptor. Essential for the catalytic activity of complex I. The sequence is that of NADH-ubiquinone oxidoreductase chain 3 from Rattus norvegicus (Rat).